The following is a 286-amino-acid chain: Polyamine aminopropyltransferase (286 aa).

Positions 3–240 (DLWYSESHAD…GHWLFGFASK (238 aa)) constitute a PABS domain. Residue Gln-32 coordinates S-methyl-5'-thioadenosine. Residues His-63 and Asp-87 each contribute to the spermidine site. S-methyl-5'-thioadenosine is bound by residues Glu-107 and 139–140 (DG). Asp-158 (proton acceptor) is an active-site residue. A spermidine-binding site is contributed by 158 to 161 (DSTD). Pro-165 contributes to the S-methyl-5'-thioadenosine binding site.

Belongs to the spermidine/spermine synthase family. As to quaternary structure, homodimer or homotetramer.

The protein localises to the cytoplasm. It carries out the reaction S-adenosyl 3-(methylsulfanyl)propylamine + putrescine = S-methyl-5'-thioadenosine + spermidine + H(+). Its pathway is amine and polyamine biosynthesis; spermidine biosynthesis; spermidine from putrescine: step 1/1. Catalyzes the irreversible transfer of a propylamine group from the amino donor S-adenosylmethioninamine (decarboxy-AdoMet) to putrescine (1,4-diaminobutane) to yield spermidine. The sequence is that of Polyamine aminopropyltransferase from Clostridium acetobutylicum (strain ATCC 824 / DSM 792 / JCM 1419 / IAM 19013 / LMG 5710 / NBRC 13948 / NRRL B-527 / VKM B-1787 / 2291 / W).